Here is a 149-residue protein sequence, read N- to C-terminus: Small ribosomal subunit protein bS16 (149 aa).

The disordered stretch occupies residues 115–149 (KLKAAKSEADAKAKAEAEAAATEEAPAEEPAAEAE). Over residues 119-131 (AKSEADAKAKAEA) the composition is skewed to basic and acidic residues. Residues 139–149 (APAEEPAAEAE) show a composition bias toward acidic residues.

The protein belongs to the bacterial ribosomal protein bS16 family.

This Bifidobacterium adolescentis (strain ATCC 15703 / DSM 20083 / NCTC 11814 / E194a) protein is Small ribosomal subunit protein bS16.